A 434-amino-acid polypeptide reads, in one-letter code: MAKADIARRVYNHAWKLDPIVRSLLDTDFYKLLMLQMIWKLYPDVDVTFTLINRTTSVRIADEIDEAELRAQLDHVRTLGISKKELIWLAGNSFYGRTQIFEPEFLAWLSAIRLPAYELSKRDGQYELTFRGRWMETTLWEIPALAIINELRSRAALKSLGYFTLDVIYARAKAKMWEKVERLKQLPGLRISDFGTRRRHSFLWQRWCVEALKEGIGEAFTGTSNVLLAMDSDLEAVGTNAHELPMVAAALAKTDAELANAPYKVLQDWNTLYNGNLLIVLPDAFGTSAFLRDAPPWVADWTGFRPDSAPPIEGGERIIAWWEKMGRDPRQKLLIFSDGLDVDAIIDTYRHFEGRVRMSFGWGTNLTNDFIGCAPHDIAGLKPISIVCKITEANGRPAVKLSDNPLKATGEPAEVERYLKFFGSEDRVEHAVKV.

At histidine 242 the chain carries Phosphohistidine; by autocatalysis.

Belongs to the NAPRTase family. In terms of processing, transiently phosphorylated on a His residue during the reaction cycle. Phosphorylation strongly increases the affinity for substrates and increases the rate of nicotinate D-ribonucleotide production. Dephosphorylation regenerates the low-affinity form of the enzyme, leading to product release.

The catalysed reaction is nicotinate + 5-phospho-alpha-D-ribose 1-diphosphate + ATP + H2O = nicotinate beta-D-ribonucleotide + ADP + phosphate + diphosphate. It functions in the pathway cofactor biosynthesis; NAD(+) biosynthesis; nicotinate D-ribonucleotide from nicotinate: step 1/1. Its function is as follows. Catalyzes the synthesis of beta-nicotinate D-ribonucleotide from nicotinate and 5-phospho-D-ribose 1-phosphate at the expense of ATP. The polypeptide is Nicotinate phosphoribosyltransferase (Allorhizobium ampelinum (strain ATCC BAA-846 / DSM 112012 / S4) (Agrobacterium vitis (strain S4))).